We begin with the raw amino-acid sequence, 745 residues long: Mitogen-activated protein kinase kinase kinase zak-1 (745 aa).

In terms of domain architecture, Protein kinase spans Ile31 to Met305. ATP contacts are provided by residues Ile37–Val45 and Lys63. Residue Asp159 is the Proton acceptor of the active site. The stretch at Leu307–Val352 forms a coiled coil. The 73-residue stretch at Trp366–Thr438 folds into the SAM domain. A disordered region spans residues Leu693–Thr745. Residues Trp735–Thr745 are compositionally biased toward basic residues.

The protein belongs to the protein kinase superfamily. STE Ser/Thr protein kinase family. MAP kinase kinase kinase subfamily. Mg(2+) serves as cofactor. Widely expressed; expressed in most tissues, including intestines, muscle and the nervous system.

Its subcellular location is the cytoplasm. It localises to the nucleus. The catalysed reaction is L-seryl-[protein] + ATP = O-phospho-L-seryl-[protein] + ADP + H(+). It carries out the reaction L-threonyl-[protein] + ATP = O-phospho-L-threonyl-[protein] + ADP + H(+). Stress-activated component of a protein kinase signal transduction cascade that promotes programmed cell death in response to ribotoxic stress. Acts as the proximal sensor of ribotoxic stress: directly binds to the ribosome, thereby acting as a sentinel for colliding ribosomes. Upon ribosome collisions, activates the stress-activated protein kinase signal transduction cascade, leading to programmed cell death. Acts by catalyzing phosphorylation of MAP kinase kinases, leading to activation of the JNK and MAP kinase p38 pathways. This chain is Mitogen-activated protein kinase kinase kinase zak-1, found in Caenorhabditis elegans.